The chain runs to 504 residues: Deoxyguanosinetriphosphate triphosphohydrolase (504 aa).

The region spanning 66 to 273 (RLTHSLEVQQ…MEAADDISYC (208 aa)) is the HD domain.

The protein belongs to the dGTPase family. Type 1 subfamily. As to quaternary structure, homotetramer. It depends on Mg(2+) as a cofactor.

It carries out the reaction dGTP + H2O = 2'-deoxyguanosine + triphosphate + H(+). DGTPase preferentially hydrolyzes dGTP over the other canonical NTPs. The polypeptide is Deoxyguanosinetriphosphate triphosphohydrolase (Cronobacter sakazakii (strain ATCC BAA-894) (Enterobacter sakazakii)).